Reading from the N-terminus, the 308-residue chain is Porphobilinogen deaminase (308 aa).

Cysteine 243 is modified (S-(dipyrrolylmethanemethyl)cysteine).

The protein belongs to the HMBS family. As to quaternary structure, monomer. Dipyrromethane is required as a cofactor.

It carries out the reaction 4 porphobilinogen + H2O = hydroxymethylbilane + 4 NH4(+). It functions in the pathway porphyrin-containing compound metabolism; protoporphyrin-IX biosynthesis; coproporphyrinogen-III from 5-aminolevulinate: step 2/4. Functionally, tetrapolymerization of the monopyrrole PBG into the hydroxymethylbilane pre-uroporphyrinogen in several discrete steps. This chain is Porphobilinogen deaminase, found in Mesorhizobium japonicum (strain LMG 29417 / CECT 9101 / MAFF 303099) (Mesorhizobium loti (strain MAFF 303099)).